Here is a 681-residue protein sequence, read N- to C-terminus: DNA ligase (681 aa).

NAD(+)-binding positions include 44–48 (DYIYD), 94–95 (SL), and glutamate 124. Lysine 126 (N6-AMP-lysine intermediate) is an active-site residue. 4 residues coordinate NAD(+): arginine 147, glutamate 181, lysine 297, and lysine 321. The Zn(2+) site is built by cysteine 415, cysteine 418, cysteine 433, and cysteine 438. Positions 598–681 (DETSFFYGKK…EAQAKEGTDK (84 aa)) constitute a BRCT domain.

This sequence belongs to the NAD-dependent DNA ligase family. LigA subfamily. Mg(2+) serves as cofactor. Requires Mn(2+) as cofactor.

It catalyses the reaction NAD(+) + (deoxyribonucleotide)n-3'-hydroxyl + 5'-phospho-(deoxyribonucleotide)m = (deoxyribonucleotide)n+m + AMP + beta-nicotinamide D-nucleotide.. In terms of biological role, DNA ligase that catalyzes the formation of phosphodiester linkages between 5'-phosphoryl and 3'-hydroxyl groups in double-stranded DNA using NAD as a coenzyme and as the energy source for the reaction. It is essential for DNA replication and repair of damaged DNA. The sequence is that of DNA ligase from Leuconostoc citreum (strain KM20).